A 100-amino-acid chain; its full sequence is Small ribosomal subunit protein uS14 (100 aa).

It belongs to the universal ribosomal protein uS14 family. Part of the 30S ribosomal subunit. Contacts proteins S3 and S10.

Binds 16S rRNA, required for the assembly of 30S particles and may also be responsible for determining the conformation of the 16S rRNA at the A site. This Prochlorococcus marinus (strain MIT 9215) protein is Small ribosomal subunit protein uS14.